We begin with the raw amino-acid sequence, 453 residues long: Lipase 9 (453 aa).

An N-terminal signal peptide occupies residues methionine 1–alanine 14. N-linked (GlcNAc...) asparagine glycosylation occurs at asparagine 36. Cysteine 110 and cysteine 281 form a disulfide bridge. Catalysis depends on serine 194, which acts as the Charge relay system. N-linked (GlcNAc...) asparagine glycosylation is found at asparagine 229, asparagine 266, and asparagine 269. Residues aspartate 343 and histidine 376 each act as charge relay system in the active site. An intrachain disulfide couples cysteine 359 to cysteine 404. Residue asparagine 417 is glycosylated (N-linked (GlcNAc...) asparagine).

The protein belongs to the AB hydrolase superfamily. Lipase family. Class Lip subfamily.

It is found in the secreted. It carries out the reaction a triacylglycerol + H2O = a diacylglycerol + a fatty acid + H(+). Secreted lipase that is able to hydrolyze both the neutral triacylglycerols and the monopalmitate ester Tween 40, allowing the use of hydrolyzed products as carbon sources. Has broad lipolytic activity, which may be important for colonization and subsequent infection, therefore contributing to the persistence and virulence in human tissue. This is Lipase 9 from Candida albicans (strain SC5314 / ATCC MYA-2876) (Yeast).